A 194-amino-acid polypeptide reads, in one-letter code: Glycerol-3-phosphate acyltransferase (194 aa).

5 helical membrane-spanning segments follow: residues glutamate 4 to alanine 24, tryptophan 80 to phenylalanine 100, valine 112 to valine 132, tyrosine 137 to glutamate 157, and leucine 161 to isoleucine 181.

The protein belongs to the PlsY family. In terms of assembly, probably interacts with PlsX.

The protein resides in the cell inner membrane. The enzyme catalyses an acyl phosphate + sn-glycerol 3-phosphate = a 1-acyl-sn-glycero-3-phosphate + phosphate. Its pathway is lipid metabolism; phospholipid metabolism. In terms of biological role, catalyzes the transfer of an acyl group from acyl-phosphate (acyl-PO(4)) to glycerol-3-phosphate (G3P) to form lysophosphatidic acid (LPA). This enzyme utilizes acyl-phosphate as fatty acyl donor, but not acyl-CoA or acyl-ACP. This is Glycerol-3-phosphate acyltransferase from Geobacter sulfurreducens (strain ATCC 51573 / DSM 12127 / PCA).